The sequence spans 494 residues: One cut domain family member 3 (494 aa).

Disordered regions lie at residues 130–162, 199–239, and 295–319; these read AAAVAGAHGGHPHAHPHPAAAPPPPPPPQRLAA, LSPL…GDKL, and AHGPHGGGGGPGGSGGGPSAGAAAE. Pro residues-rich tracts occupy residues 148 to 158 and 214 to 225; these read AAAPPPPPPPQ and PQPPPPPPPPPL. Residues 297 to 313 are compositionally biased toward gly residues; sequence GPHGGGGGPGGSGGGPS. Residues 312–398 constitute a DNA-binding region (CUT); that stretch reads PSAGAAAEEI…QRMSALRLAA (87 aa). Positions 414-473 form a DNA-binding region, homeobox; the sequence is PKKQRLVFTDLQRRTLIAIFKENKRPSKEMQVTISQQLGLELNTVSNFFMNARRRCMNRW. The interval 475–494 is disordered; that stretch reads EEPSTAPGGPAGATATFSKA. A compositionally biased stretch (low complexity) spans 476–494; the sequence is EPSTAPGGPAGATATFSKA.

It belongs to the CUT homeobox family.

Its subcellular location is the nucleus. Functionally, transcriptional activator. Binds the consensus DNA sequence 5'-DHWATTGAYTWWD-3' on a variety of gene promoters such as those of HNF3B and TTR. In Homo sapiens (Human), this protein is One cut domain family member 3 (ONECUT3).